Here is a 600-residue protein sequence, read N- to C-terminus: tRNA(Ile)-lysidine synthase, chloroplastic (600 aa).

ATP is bound at residue 35–40 (SGGQDS).

It belongs to the tRNA(Ile)-lysidine synthase family.

The protein resides in the plastid. The protein localises to the chloroplast. It catalyses the reaction cytidine(34) in tRNA(Ile2) + L-lysine + ATP = lysidine(34) in tRNA(Ile2) + AMP + diphosphate + H(+). Ligates lysine onto the cytidine present at position 34 of the AUA codon-specific tRNA(Ile) that contains the anticodon CAU, in an ATP-dependent manner. Cytidine is converted to lysidine, thus changing the amino acid specificity of the tRNA from methionine to isoleucine. The sequence is that of tRNA(Ile)-lysidine synthase, chloroplastic from Tupiella akineta (Green alga).